We begin with the raw amino-acid sequence, 479 residues long: Trigger factor (479 aa).

Positions 174-261 (GDIAVVSFSG…LKELKTRELP (88 aa)) constitute a PPIase FKBP-type domain. A disordered region spans residues 437-479 (KVLESEAKTSKPAAKSKGSKTKSTKTKTNKAKTEKPASDKTKS). A compositionally biased stretch (basic residues) spans 453–466 (KGSKTKSTKTKTNK). A compositionally biased stretch (basic and acidic residues) spans 467 to 479 (AKTEKPASDKTKS).

The protein belongs to the FKBP-type PPIase family. Tig subfamily.

It is found in the cytoplasm. The enzyme catalyses [protein]-peptidylproline (omega=180) = [protein]-peptidylproline (omega=0). In terms of biological role, involved in protein export. Acts as a chaperone by maintaining the newly synthesized protein in an open conformation. Functions as a peptidyl-prolyl cis-trans isomerase. The sequence is that of Trigger factor from Prochlorococcus marinus (strain MIT 9303).